A 78-amino-acid chain; its full sequence is Small ribosomal subunit protein bS20 (78 aa).

This sequence belongs to the bacterial ribosomal protein bS20 family.

Its function is as follows. Binds directly to 16S ribosomal RNA. This is Small ribosomal subunit protein bS20 from Streptococcus sanguinis (strain SK36).